The sequence spans 425 residues: Kynureninase (425 aa).

Pyridoxal 5'-phosphate is bound by residues Leu105, Thr106, Phe133–Asp136, Asp218, His221, and Tyr243. N6-(pyridoxal phosphate)lysine is present on Lys244. Positions 274 and 302 each coordinate pyridoxal 5'-phosphate.

Belongs to the kynureninase family. As to quaternary structure, homodimer. The cofactor is pyridoxal 5'-phosphate.

It carries out the reaction L-kynurenine + H2O = anthranilate + L-alanine + H(+). The catalysed reaction is 3-hydroxy-L-kynurenine + H2O = 3-hydroxyanthranilate + L-alanine + H(+). It participates in amino-acid degradation; L-kynurenine degradation; L-alanine and anthranilate from L-kynurenine: step 1/1. The protein operates within cofactor biosynthesis; NAD(+) biosynthesis; quinolinate from L-kynurenine: step 2/3. In terms of biological role, catalyzes the cleavage of L-kynurenine (L-Kyn) and L-3-hydroxykynurenine (L-3OHKyn) into anthranilic acid (AA) and 3-hydroxyanthranilic acid (3-OHAA), respectively. This chain is Kynureninase, found in Christiangramia forsetii (strain DSM 17595 / CGMCC 1.15422 / KT0803) (Gramella forsetii).